The primary structure comprises 156 residues: Cyanate hydratase (156 aa).

Active-site residues include arginine 96, glutamate 99, and serine 122.

The protein belongs to the cyanase family.

It catalyses the reaction cyanate + hydrogencarbonate + 3 H(+) = NH4(+) + 2 CO2. Functionally, catalyzes the reaction of cyanate with bicarbonate to produce ammonia and carbon dioxide. This chain is Cyanate hydratase, found in Escherichia coli (strain ATCC 8739 / DSM 1576 / NBRC 3972 / NCIMB 8545 / WDCM 00012 / Crooks).